The chain runs to 204 residues: MKLLHIDSSILGDHSVSRQLTAAIIARLQEVTPDLDVSHRDLAANPLSHLSGALLAASAPGAPAPDPSTQAALGESAAILAEFLAADIVVVGAPMYNFAISSQLKAWIDRLVIAGKTFRYADGAVEGLAGGRRLIIASSRGGVFEAGAAAAALDYQETYLRAIFGFIGIADVEIIRAEGLAFGEDARALAIKQAGDAILRLEAA.

Residues serine 9, 15–17, 95–98, and 139–142 contribute to the FMN site; these read SVS, MYNF, and SRGG.

It belongs to the azoreductase type 1 family. As to quaternary structure, homodimer. The cofactor is FMN.

The enzyme catalyses 2 a quinone + NADH + H(+) = 2 a 1,4-benzosemiquinone + NAD(+). The catalysed reaction is N,N-dimethyl-1,4-phenylenediamine + anthranilate + 2 NAD(+) = 2-(4-dimethylaminophenyl)diazenylbenzoate + 2 NADH + 2 H(+). Functionally, quinone reductase that provides resistance to thiol-specific stress caused by electrophilic quinones. In terms of biological role, also exhibits azoreductase activity. Catalyzes the reductive cleavage of the azo bond in aromatic azo compounds to the corresponding amines. This chain is FMN-dependent NADH:quinone oxidoreductase, found in Methylocella silvestris (strain DSM 15510 / CIP 108128 / LMG 27833 / NCIMB 13906 / BL2).